A 235-amino-acid polypeptide reads, in one-letter code: Small ribosomal subunit protein eS4 (235 aa).

Residues 38 to 99 (VTLLSIIRDY…GESYRVVYND (62 aa)) enclose the S4 RNA-binding domain.

The protein belongs to the eukaryotic ribosomal protein eS4 family.

This is Small ribosomal subunit protein eS4 (rps4e) from Thermoplasma acidophilum (strain ATCC 25905 / DSM 1728 / JCM 9062 / NBRC 15155 / AMRC-C165).